A 331-amino-acid polypeptide reads, in one-letter code: Cytosolic 5'-nucleotidase 3A (331 aa).

Aspartate 83 serves as the catalytic Nucleophile. Aspartate 83 and aspartate 85 together coordinate Mg(2+). Aspartate 85 acts as the Proton donor in catalysis. Glutamate 130 contributes to the CMP binding site. 2 residues coordinate N(7)-methyl-GMP: glutamate 130 and serine 151. Substrate-binding positions include 198–199 (SA) and lysine 247. Position 272 (aspartate 272) interacts with Mg(2+).

It belongs to the pyrimidine 5'-nucleotidase family.

Its subcellular location is the cytoplasm. The enzyme catalyses N(7)-methyl-GMP + H2O = N(7)-methylguanosine + phosphate. It carries out the reaction a ribonucleoside 5'-phosphate + H2O = a ribonucleoside + phosphate. In terms of biological role, nucleotidase which shows specific activity towards cytidine monophosphate (CMP) and 7-methylguanosine monophosphate (m(7)GMP). CMP seems to be the preferred substrate. This Gallus gallus (Chicken) protein is Cytosolic 5'-nucleotidase 3A (NT5C3A).